Consider the following 372-residue polypeptide: Glutamate 5-kinase (372 aa).

K6 is an ATP binding site. Residues S46, D133, and N145 each contribute to the substrate site. Residues 165–166 (TD) and 207–213 (TGGMYTK) each bind ATP. Residues 272 to 350 (SGRLFIDEGA…HEIEKILGYK (79 aa)) form the PUA domain.

This sequence belongs to the glutamate 5-kinase family.

The protein resides in the cytoplasm. It carries out the reaction L-glutamate + ATP = L-glutamyl 5-phosphate + ADP. It functions in the pathway amino-acid biosynthesis; L-proline biosynthesis; L-glutamate 5-semialdehyde from L-glutamate: step 1/2. Functionally, catalyzes the transfer of a phosphate group to glutamate to form L-glutamate 5-phosphate. The protein is Glutamate 5-kinase of Thermoanaerobacter pseudethanolicus (strain ATCC 33223 / 39E) (Clostridium thermohydrosulfuricum).